The following is a 356-amino-acid chain: UDP-N-acetylglucosamine--N-acetylmuramyl-(pentapeptide) pyrophosphoryl-undecaprenol N-acetylglucosamine transferase (356 aa).

UDP-N-acetyl-alpha-D-glucosamine contacts are provided by Ser195 and Gln287.

The protein belongs to the glycosyltransferase 28 family. MurG subfamily.

It is found in the cell membrane. It catalyses the reaction Mur2Ac(oyl-L-Ala-gamma-D-Glu-L-Lys-D-Ala-D-Ala)-di-trans,octa-cis-undecaprenyl diphosphate + UDP-N-acetyl-alpha-D-glucosamine = beta-D-GlcNAc-(1-&gt;4)-Mur2Ac(oyl-L-Ala-gamma-D-Glu-L-Lys-D-Ala-D-Ala)-di-trans,octa-cis-undecaprenyl diphosphate + UDP + H(+). The protein operates within cell wall biogenesis; peptidoglycan biosynthesis. Its function is as follows. Cell wall formation. Catalyzes the transfer of a GlcNAc subunit on undecaprenyl-pyrophosphoryl-MurNAc-pentapeptide (lipid intermediate I) to form undecaprenyl-pyrophosphoryl-MurNAc-(pentapeptide)GlcNAc (lipid intermediate II). This Streptococcus sanguinis (strain SK36) protein is UDP-N-acetylglucosamine--N-acetylmuramyl-(pentapeptide) pyrophosphoryl-undecaprenol N-acetylglucosamine transferase.